A 294-amino-acid chain; its full sequence is 4-diphosphocytidyl-2-C-methyl-D-erythritol kinase (294 aa).

Lysine 19 is an active-site residue. 106–116 serves as a coordination point for ATP; that stretch reads PVASGIGGGSA. Aspartate 148 is a catalytic residue.

This sequence belongs to the GHMP kinase family. IspE subfamily.

It carries out the reaction 4-CDP-2-C-methyl-D-erythritol + ATP = 4-CDP-2-C-methyl-D-erythritol 2-phosphate + ADP + H(+). The protein operates within isoprenoid biosynthesis; isopentenyl diphosphate biosynthesis via DXP pathway; isopentenyl diphosphate from 1-deoxy-D-xylulose 5-phosphate: step 3/6. Its function is as follows. Catalyzes the phosphorylation of the position 2 hydroxy group of 4-diphosphocytidyl-2C-methyl-D-erythritol. The protein is 4-diphosphocytidyl-2-C-methyl-D-erythritol kinase of Rhizobium etli (strain ATCC 51251 / DSM 11541 / JCM 21823 / NBRC 15573 / CFN 42).